The chain runs to 429 residues: Histidinol dehydrogenase (429 aa).

Positions 130, 191, and 214 each coordinate NAD(+). Positions 237, 259, and 262 each coordinate substrate. The Zn(2+) site is built by Q259 and H262. Catalysis depends on proton acceptor residues E327 and H328. Substrate-binding residues include H328, D361, E415, and H420. D361 is a Zn(2+) binding site. Residue H420 coordinates Zn(2+).

It belongs to the histidinol dehydrogenase family. Zn(2+) is required as a cofactor.

The enzyme catalyses L-histidinol + 2 NAD(+) + H2O = L-histidine + 2 NADH + 3 H(+). It participates in amino-acid biosynthesis; L-histidine biosynthesis; L-histidine from 5-phospho-alpha-D-ribose 1-diphosphate: step 9/9. In terms of biological role, catalyzes the sequential NAD-dependent oxidations of L-histidinol to L-histidinaldehyde and then to L-histidine. This is Histidinol dehydrogenase from Geobacter sulfurreducens (strain ATCC 51573 / DSM 12127 / PCA).